We begin with the raw amino-acid sequence, 97 residues long: Acylphosphatase (97 aa).

The Acylphosphatase-like domain occupies 9–97 (RKHIVVTGLV…ETARAFGVRQ (89 aa)). Active-site residues include Arg-24 and Asn-42.

This sequence belongs to the acylphosphatase family.

It catalyses the reaction an acyl phosphate + H2O = a carboxylate + phosphate + H(+). The chain is Acylphosphatase (acyP) from Bifidobacterium longum (strain NCC 2705).